The sequence spans 206 residues: Large ribosomal subunit protein uL4 (206 aa).

Residues 45-78 (QGNRAQKDREQVKHTTKKPWRQKGTGRARAGMSS) form a disordered region. The segment covering 58-70 (HTTKKPWRQKGTG) has biased composition (basic residues).

This sequence belongs to the universal ribosomal protein uL4 family. In terms of assembly, part of the 50S ribosomal subunit.

One of the primary rRNA binding proteins, this protein initially binds near the 5'-end of the 23S rRNA. It is important during the early stages of 50S assembly. It makes multiple contacts with different domains of the 23S rRNA in the assembled 50S subunit and ribosome. In terms of biological role, forms part of the polypeptide exit tunnel. The polypeptide is Large ribosomal subunit protein uL4 (Burkholderia ambifaria (strain MC40-6)).